A 107-amino-acid polypeptide reads, in one-letter code: Protein Rev (107 aa).

The residue at position 5 (serine 5) is a Phosphoserine; by host CK2. The interval alanine 18 to asparagine 26 is homomultimerization. Disordered stretches follow at residues glutamine 24 to arginine 48 and histidine 82 to serine 107. A Nuclear localization signal and RNA-binding (RRE) motif is present at residues threonine 34 to arginine 50. A compositionally biased stretch (basic residues) spans glutamine 36–arginine 48. A Nuclear export signal and binding to XPO1 motif is present at residues leucine 73–aspartate 84. Over residues aspartate 88–glutamate 101 the composition is skewed to polar residues. Residue serine 92 is modified to Phosphoserine; by host.

It belongs to the HIV-1 REV protein family. As to quaternary structure, homomultimer; when bound to the RRE. Multimeric assembly is essential for activity and may involve XPO1. Binds to human KPNB1, XPO1, TNPO1, RANBP5 and IPO7. Interacts with the viral Integrase. Interacts with human KHDRBS1. Interacts with human NAP1; this interaction decreases Rev multimerization and stimulates its activity. Interacts with human DEAD-box helicases DDX3 and DDX24; these interactions may serve for viral RNA export to the cytoplasm and packaging, respectively. Interacts with human PSIP1; this interaction may inhibit HIV-1 DNA integration by promoting dissociation of the Integrase-LEDGF/p75 complex. In terms of processing, asymmetrically arginine dimethylated at one site by host PRMT6. Methylation impairs the RNA-binding activity and export of viral RNA from the nucleus to the cytoplasm. Post-translationally, phosphorylated by protein kinase CK2. Presence of, and maybe binding to the N-terminus of the regulatory beta subunit of CK2 is necessary for CK2-mediated Rev's phosphorylation.

Its subcellular location is the host nucleus. The protein resides in the host nucleolus. The protein localises to the host cytoplasm. Escorts unspliced or incompletely spliced viral pre-mRNAs (late transcripts) out of the nucleus of infected cells. These pre-mRNAs carry a recognition sequence called Rev responsive element (RRE) located in the env gene, that is not present in fully spliced viral mRNAs (early transcripts). This function is essential since most viral proteins are translated from unspliced or partially spliced pre-mRNAs which cannot exit the nucleus by the pathway used by fully processed cellular mRNAs. Rev itself is translated from a fully spliced mRNA that readily exits the nucleus. Rev's nuclear localization signal (NLS) binds directly to KPNB1/Importin beta-1 without previous binding to KPNA1/Importin alpha-1. KPNB1 binds to the GDP bound form of RAN (Ran-GDP) and targets Rev to the nucleus. In the nucleus, the conversion from Ran-GDP to Ran-GTP dissociates Rev from KPNB1 and allows Rev's binding to the RRE in viral pre-mRNAs. Rev multimerization on the RRE via cooperative assembly exposes its nuclear export signal (NES) to the surface. Rev can then form a complex with XPO1/CRM1 and Ran-GTP, leading to nuclear export of the complex. Conversion from Ran-GTP to Ran-GDP mediates dissociation of the Rev/RRE/XPO1/RAN complex, so that Rev can return to the nucleus for a subsequent round of export. Beside KPNB1, also seems to interact with TNPO1/Transportin-1, RANBP5/IPO5 and IPO7/RANBP7 for nuclear import. The nucleoporin-like HRB/RIP is an essential cofactor that probably indirectly interacts with Rev to release HIV RNAs from the perinuclear region to the cytoplasm. This is Protein Rev from Human immunodeficiency virus type 1 group M subtype G (isolate SE6165) (HIV-1).